The primary structure comprises 227 residues: MTNNLSGYRNKFVRVKTSKKRTVSSSNWLRRQLNDPYVAKARIDGFRSRAAYKLLEIHEKFKLFIPNMKIVDLGAAPGGWSQVASKLIKASDNNLNNKIISIDVLEIEHVAGVEFVQKDFFEADTEELIIQALDGRADIVMSDMASNTIGHKATDHIRTLLLCEQAFEFALKVLKPSGHFIAKIFRGGAENELLHKVKREFKTVKHFKPSSSRSESTEIYLVALNKK.

Residues G78, W80, D103, D119, and D143 each coordinate S-adenosyl-L-methionine. K183 functions as the Proton acceptor in the catalytic mechanism.

The protein belongs to the class I-like SAM-binding methyltransferase superfamily. RNA methyltransferase RlmE family.

It is found in the cytoplasm. It catalyses the reaction uridine(2552) in 23S rRNA + S-adenosyl-L-methionine = 2'-O-methyluridine(2552) in 23S rRNA + S-adenosyl-L-homocysteine + H(+). In terms of biological role, specifically methylates the uridine in position 2552 of 23S rRNA at the 2'-O position of the ribose in the fully assembled 50S ribosomal subunit. The protein is Ribosomal RNA large subunit methyltransferase E of Rickettsia peacockii (strain Rustic).